A 178-amino-acid chain; its full sequence is Enhancer of split m5 protein (178 aa).

The 56-residue stretch at 18-73 (YLKVKKPLLERQRRARMNKCLDTLKTLVAEFQGDDAILRMDKAEMLEAALVFMRKQ) folds into the bHLH domain. An Orange domain is found at 89-122 (FKNGYMNAVSEISRVMACTPAMSVDVGKTVMTHL). Over residues 135-165 (VQTSVTTSTPRPLSPASSGYHSDNEDSQSAA) the composition is skewed to polar residues. Residues 135–178 (VQTSVTTSTPRPLSPASSGYHSDNEDSQSAASPKPVEETMWRPW) are disordered. Basic and acidic residues predominate over residues 169-178 (PVEETMWRPW). The WRPW motif signature appears at 175–178 (WRPW).

In terms of assembly, transcription repression requires formation of a complex with a corepressor protein (Groucho). Forms homodimers.

It is found in the nucleus. Its function is as follows. Participates in the control of cell fate choice by uncommitted neuroectodermal cells in the embryo. Transcriptional repressor. Binds DNA on N-box motifs: 5'-CACNAG-3'. This is Enhancer of split m5 protein from Drosophila melanogaster (Fruit fly).